The following is a 348-amino-acid chain: MNNHSYLKKNSFHEGDARELLKCIEEESIALSVWSPPYHVGKKYEEGQTYEQWSSLLTKVIALHYPILKPGGFLVINIDDILAFPDPRMPRFQAVNLKKHRVSVTREDILNALKLEPELTKYQLAKKFNCSEQTIERRLKGNNIRGGKYNVQTKVKLAGPVLEKAAEEAGLYLYDRRIWAKDPAWQNSQWHSNSYKAVSEFEHLYIFWKPGETVIDRNKLSKEEWASWASRGIWYIPSVRKNDDHEAKFPLLLPQRLIKLLTQKGDTVLDCFMGSGTTAVAALSESRNFIGIEKEPKYIQLSNKNVETFYISRNKEASKIKETNHSVTDEKKKAEQLELLLEENENSL.

It belongs to the N(4)/N(6)-methyltransferase family.

It carries out the reaction a 2'-deoxycytidine in DNA + S-adenosyl-L-methionine = an N(4)-methyl-2'-deoxycytidine in DNA + S-adenosyl-L-homocysteine + H(+). In terms of biological role, a beta subtype methylase, recognizes the double-stranded sequence 5'-GCCNNNNNGGC-3', methylates C-2 on both strands, and protects the DNA from cleavage by the BglI endonuclease. The chain is Type II methyltransferase M.BglI (bglIM) from Bacillus subtilis.